We begin with the raw amino-acid sequence, 85 residues long: U4-theraphotoxin-Hhn1r (85 aa).

The first 22 residues, 1 to 22 (MKVTLIAILTCAAVLVLHTTAA), serve as a signal peptide directing secretion. The propeptide occupies 23–48 (EELEAESQLMEVGMPDTELAAVDEER). Intrachain disulfides connect Cys-52–Cys-66, Cys-56–Cys-77, and Cys-71–Cys-82.

The protein belongs to the neurotoxin 12 (Hwtx-2) family. 02 (Hwtx-2) subfamily. In terms of tissue distribution, expressed by the venom gland.

The protein resides in the secreted. Postsynaptic neurotoxin. This Cyriopagopus hainanus (Chinese bird spider) protein is U4-theraphotoxin-Hhn1r.